A 171-amino-acid chain; its full sequence is Glucagon family neuropeptides (171 aa).

Residues methionine 1 to serine 22 form the signal peptide. A propeptide spanning residues serine 23–glutamate 76 is cleaved from the precursor. Residues valine 145 to leucine 153 form an important for receptor binding region. A Lysine amide modification is found at lysine 164. Positions valine 168–leucine 171 are excised as a propeptide.

This sequence belongs to the glucagon family.

It is found in the secreted. Its function is as follows. Primary role of GRF is to release GH from the pituitary. In terms of biological role, PACAP is a neuropeptide involved in diverse array of physiological processes through activating the PACAP subfamily of class B1 G protein-coupled receptors: VIP receptor 1 (VIPR1), VIP receptor 2 (VIPR2), and PACAP type I receptor (ADCYAP1R1). Exerts neuroprotective and general cytoprotective effects due to anti-apoptotic, anti-inflammatory, and antioxidant actions. This Pelophylax ridibundus (Marsh frog) protein is Glucagon family neuropeptides (adcyap1).